A 161-amino-acid polypeptide reads, in one-letter code: MGRVTAPEPLSAFHQVAEFVSGEAVLDDWLKQKGLKNQALGAARTFVVCKKDTKQVAGFYSLATGSVNHTEATGNLRRNMPDPIPVIILARLAVDLSFHGKGLGADLLHDAVLRCYRVAENIGVRAIMVHALTEEAKNFYIHHGFKSSQTQQRTLFLRLPQ.

Residues L92, V94, H99, G100, G102, G104, A105, L132, and E135 each contribute to the acetyl-CoA site. Residue Y140 is part of the active site. Position 142 (H142) interacts with acetyl-CoA.

It belongs to the acetyltransferase family. GNAT subfamily. In terms of assembly, homodimer (in absence of antitoxin). Forms a complex with cognate antitoxin TacA1. Forms a 4:2 antitoxin:toxin complex with cognate antitoxin TacA1.

It catalyses the reaction glycyl-tRNA(Gly) + acetyl-CoA = N-acetylglycyl-tRNA(Gly) + CoA + H(+). Its function is as follows. Toxic component of a type II toxin-antitoxin (TA) system. Acetylates tRNA and inhibits translation, does not acetylate uncharged tRNA. Upon expression in situ acetylates only Gly-tRNA(Gly). In vitro acetylates mainly Gly and Ile/Leu. Upon induction of the toxin gene in lag phase in rich medium (but not mid-exponential phase) the lag phase is extended by several hours, locking bacteria in a non-growth state. Neutralized only by cognate antitoxin TacA1 (A8), but not by TacA2 or TacA3. Its toxic effect is neutralized by expression of peptidyl-tRNA hydrolase (pth) in lag phase. NAD-dependent protein deacylase (cobB) also play a role in detoxifying TacT targets. Expression increases persister cell formation, which is also abolished by either cognate antitoxin or Pth expression. Plays a role in persister cell formation. Functionally, the TacA1-TacT1 complex binds (and probably represses) its own promoter DNA but not that of tacA3-tacT3, it does not repress the tacA3-tacT3 promoter. The chain is tRNA-acetylating toxin 1 from Salmonella typhimurium (strain 14028s / SGSC 2262).